Consider the following 356-residue polypeptide: Carbamoyl phosphate synthase small chain (356 aa).

The tract at residues 1–160 (MKGYLKLEDG…TKKPYRIAGI (160 aa)) is CPSase. Residues Ser-45, Gly-211, and Gly-213 each coordinate L-glutamine. A Glutamine amidotransferase type-1 domain is found at 163–350 (KLAFIDLGTK…MDIVMVYKRR (188 aa)). Cys-238 functions as the Nucleophile in the catalytic mechanism. The L-glutamine site is built by Leu-239, Gln-242, Asn-280, Gly-282, and Tyr-283. Residues His-323 and Glu-325 contribute to the active site.

This sequence belongs to the CarA family. In terms of assembly, composed of two chains; the small (or glutamine) chain promotes the hydrolysis of glutamine to ammonia, which is used by the large (or ammonia) chain to synthesize carbamoyl phosphate. Tetramer of heterodimers (alpha,beta)4.

It catalyses the reaction hydrogencarbonate + L-glutamine + 2 ATP + H2O = carbamoyl phosphate + L-glutamate + 2 ADP + phosphate + 2 H(+). It carries out the reaction L-glutamine + H2O = L-glutamate + NH4(+). It functions in the pathway amino-acid biosynthesis; L-arginine biosynthesis; carbamoyl phosphate from bicarbonate: step 1/1. It participates in pyrimidine metabolism; UMP biosynthesis via de novo pathway; (S)-dihydroorotate from bicarbonate: step 1/3. Functionally, small subunit of the glutamine-dependent carbamoyl phosphate synthetase (CPSase). CPSase catalyzes the formation of carbamoyl phosphate from the ammonia moiety of glutamine, carbonate, and phosphate donated by ATP, constituting the first step of 2 biosynthetic pathways, one leading to arginine and/or urea and the other to pyrimidine nucleotides. The small subunit (glutamine amidotransferase) binds and cleaves glutamine to supply the large subunit with the substrate ammonia. This chain is Carbamoyl phosphate synthase small chain, found in Caldanaerobacter subterraneus subsp. tengcongensis (strain DSM 15242 / JCM 11007 / NBRC 100824 / MB4) (Thermoanaerobacter tengcongensis).